A 216-amino-acid chain; its full sequence is Imidazole glycerol phosphate synthase subunit HisH 1 (216 aa).

Positions 4–216 constitute a Glutamine amidotransferase type-1 domain; that stretch reads CVLIVDAGLG…LQNFIALNPC (213 aa). Catalysis depends on C84, which acts as the Nucleophile. Active-site residues include H195 and E197.

Heterodimer of HisH and HisF.

It localises to the cytoplasm. It catalyses the reaction 5-[(5-phospho-1-deoxy-D-ribulos-1-ylimino)methylamino]-1-(5-phospho-beta-D-ribosyl)imidazole-4-carboxamide + L-glutamine = D-erythro-1-(imidazol-4-yl)glycerol 3-phosphate + 5-amino-1-(5-phospho-beta-D-ribosyl)imidazole-4-carboxamide + L-glutamate + H(+). The enzyme catalyses L-glutamine + H2O = L-glutamate + NH4(+). It functions in the pathway amino-acid biosynthesis; L-histidine biosynthesis; L-histidine from 5-phospho-alpha-D-ribose 1-diphosphate: step 5/9. In terms of biological role, IGPS catalyzes the conversion of PRFAR and glutamine to IGP, AICAR and glutamate. The HisH subunit provides the glutamine amidotransferase activity that produces the ammonia necessary to HisF for the synthesis of IGP and AICAR. The protein is Imidazole glycerol phosphate synthase subunit HisH 1 (hisH1) of Prochlorococcus marinus (strain MIT 9313).